The sequence spans 382 residues: Prostaglandin D2 receptor 2 (382 aa).

The Extracellular segment spans residues 1-32 (MANVTLKPLCPLLEEMVQLPNHSNSSLRYIDH). N-linked (GlcNAc...) asparagine glycosylation is found at N3, N21, and N24. The chain crosses the membrane as a helical span at residues 33 to 55 (VSVLLHGLASLLGLVENGLILFV). Over 56–66 (VGCRMRQTVVT) the chain is Cytoplasmic. A helical membrane pass occupies residues 67–88 (TWVLHLALSDLLAAASLPFFTY). At 89 to 105 (FLAVGHSWELGTTFCKL) the chain is on the extracellular side. C103 and C181 are oxidised to a cystine. Residues 106–126 (HSSVFFLNMFASGFLLSAISL) traverse the membrane as a helical segment. The Cytoplasmic portion of the chain corresponds to 127–145 (DRCLQVVRPVWAQNHRTVA). Residues 146–167 (VAHRVCLMLWALAVLNTIPYFV) form a helical membrane-spanning segment. Residues 168-209 (FRDTIPRLDGRIMCYYNLLLWNPGPDRDTTCDYRQKALAVSK) lie on the Extracellular side of the membrane. A helical membrane pass occupies residues 210–230 (FLLAFMVPLAIIASSHVAVSL). Residues 231 to 246 (RLHHRGRQRTGRFVRL) are Cytoplasmic-facing. Residues 247–268 (VAAIVVAFVLCWGPYHIFSLLE) traverse the membrane as a helical segment. Residues 269-287 (ARAHSVTTLRQLASRGLPF) are Extracellular-facing. The helical transmembrane segment at 288-307 (VTSLAFFNSVVNPLLYVFTC) threads the bilayer. Topologically, residues 308-357 (PDMLYKLRRSLRAVLESVLVEDSDQSGGLRNRRRRASSTATPASTLLLAD) are cytoplasmic. The Involved in the recycling of CRTH2 signature appears at 329–332 (DSDQ). Phosphoserine occurs at positions 330 and 344.

The protein belongs to the G-protein coupled receptor 1 family. Post-translationally, phosphorylated.

The protein localises to the cell membrane. In terms of biological role, receptor for prostaglandin D2 (PGD2). Coupled to the G(i)-protein. Receptor activation may result in pertussis toxin-sensitive decreases in cAMP levels and Ca(2+) mobilization. PI3K signaling is also implicated in mediating PTGDR2 effects. PGD2 induced receptor internalization. CRTH2 internalization can be regulated by diverse kinases such as, PKC, PKA, GRK2, GPRK5/GRK5 and GRK6. Receptor activation is responsible, at least in part, in immune regulation and allergic/inflammation responses. This chain is Prostaglandin D2 receptor 2 (Ptgdr2), found in Mus musculus (Mouse).